A 471-amino-acid chain; its full sequence is Uronate isomerase (471 aa).

The protein belongs to the metallo-dependent hydrolases superfamily. Uronate isomerase family.

It catalyses the reaction D-glucuronate = D-fructuronate. It carries out the reaction aldehydo-D-galacturonate = keto-D-tagaturonate. It functions in the pathway carbohydrate metabolism; pentose and glucuronate interconversion. This chain is Uronate isomerase, found in Cellvibrio japonicus (strain Ueda107) (Pseudomonas fluorescens subsp. cellulosa).